The chain runs to 239 residues: Thymidylate kinase (239 aa).

Residue 10–17 (GINGVGKS) coordinates ATP.

Belongs to the thymidylate kinase family.

The catalysed reaction is dTMP + ATP = dTDP + ADP. It functions in the pathway pyrimidine metabolism; dTTP biosynthesis. Its function is as follows. Catalyzes the conversion of dTMP to dTDP. This chain is Thymidylate kinase (TMK), found in African swine fever virus (isolate Warthog/Namibia/Wart80/1980) (ASFV).